The following is a 137-amino-acid chain: Nucleoside diphosphate kinase (137 aa).

ATP contacts are provided by Lys10, Phe58, Arg86, Thr92, Arg103, and Asn113. The active-site Pros-phosphohistidine intermediate is the His116.

The protein belongs to the NDK family. As to quaternary structure, homotetramer. The cofactor is Mg(2+).

It localises to the cytoplasm. It catalyses the reaction a 2'-deoxyribonucleoside 5'-diphosphate + ATP = a 2'-deoxyribonucleoside 5'-triphosphate + ADP. The enzyme catalyses a ribonucleoside 5'-diphosphate + ATP = a ribonucleoside 5'-triphosphate + ADP. In terms of biological role, major role in the synthesis of nucleoside triphosphates other than ATP. The ATP gamma phosphate is transferred to the NDP beta phosphate via a ping-pong mechanism, using a phosphorylated active-site intermediate. This is Nucleoside diphosphate kinase from Helicobacter pylori (strain ATCC 700392 / 26695) (Campylobacter pylori).